Here is a 503-residue protein sequence, read N- to C-terminus: Ent-kaurene oxidase-like 5 (503 aa).

Residues 8 to 28 (GAGGIGVAAAAAVVAATLAVV) form a helical membrane-spanning segment. Cys448 is a heme binding site.

The protein belongs to the cytochrome P450 family. Heme serves as cofactor. As to expression, expressed in roots.

It is found in the membrane. In terms of biological role, may hydroxylate diterpenes. This chain is Ent-kaurene oxidase-like 5, found in Oryza sativa subsp. japonica (Rice).